The sequence spans 490 residues: Betaine aldehyde dehydrogenase (490 aa).

Thr-26, Ile-27, and Asp-93 together coordinate K(+). 150–152 (GAW) is an NAD(+) binding site. Catalysis depends on Lys-162, which acts as the Charge relay system. Residue 176–179 (KPSE) coordinates NAD(+). K(+) is bound at residue Val-180. 230-233 (GVAS) is an NAD(+) binding site. Leu-246 contacts K(+). Glu-252 functions as the Proton acceptor in the catalytic mechanism. NAD(+) contacts are provided by Gly-254, Cys-286, and Glu-387. The Nucleophile role is filled by Cys-286. Cys-286 carries the post-translational modification Cysteine sulfenic acid (-SOH). Lys-457 and Gly-460 together coordinate K(+). The Charge relay system role is filled by Glu-464.

This sequence belongs to the aldehyde dehydrogenase family. In terms of assembly, dimer of dimers. It depends on K(+) as a cofactor.

It carries out the reaction betaine aldehyde + NAD(+) + H2O = glycine betaine + NADH + 2 H(+). It functions in the pathway amine and polyamine biosynthesis; betaine biosynthesis via choline pathway; betaine from betaine aldehyde: step 1/1. Involved in the biosynthesis of the osmoprotectant glycine betaine. Catalyzes the irreversible oxidation of betaine aldehyde to the corresponding acid. The protein is Betaine aldehyde dehydrogenase of Escherichia coli O45:K1 (strain S88 / ExPEC).